The sequence spans 280 residues: DegV domain-containing protein CA_C1624 (280 aa).

The 276-residue stretch at 4–279 folds into the DegV domain; that stretch reads IALITDSTSD…PGLLGVVIFK (276 aa). 2 residues coordinate hexadecanoate: Thr60 and Ser93.

May bind long-chain fatty acids, such as palmitate, and may play a role in lipid transport or fatty acid metabolism. This is DegV domain-containing protein CA_C1624 from Clostridium acetobutylicum (strain ATCC 824 / DSM 792 / JCM 1419 / IAM 19013 / LMG 5710 / NBRC 13948 / NRRL B-527 / VKM B-1787 / 2291 / W).